The following is a 311-amino-acid chain: HPr kinase/phosphorylase (311 aa).

Residues His138 and Lys159 contribute to the active site. Residue 153–160 (GDSGIGKS) participates in ATP binding. Ser160 lines the Mg(2+) pocket. Asp177 functions as the Proton acceptor; for phosphorylation activity. Proton donor; for dephosphorylation activity in the catalytic mechanism. Residues 201–210 (LEIRGVGIID) are important for the catalytic mechanism of both phosphorylation and dephosphorylation. Glu202 is a Mg(2+) binding site. The active site involves Arg243. The tract at residues 264-269 (PVKTGR) is important for the catalytic mechanism of dephosphorylation.

The protein belongs to the HPrK/P family. As to quaternary structure, homohexamer. Requires Mg(2+) as cofactor.

The catalysed reaction is [HPr protein]-L-serine + ATP = [HPr protein]-O-phospho-L-serine + ADP + H(+). It catalyses the reaction [HPr protein]-O-phospho-L-serine + phosphate + H(+) = [HPr protein]-L-serine + diphosphate. Its function is as follows. Catalyzes the ATP- as well as the pyrophosphate-dependent phosphorylation of a specific serine residue in HPr, a phosphocarrier protein of the phosphoenolpyruvate-dependent sugar phosphotransferase system (PTS). HprK/P also catalyzes the pyrophosphate-producing, inorganic phosphate-dependent dephosphorylation (phosphorolysis) of seryl-phosphorylated HPr (P-Ser-HPr). The two antagonistic activities of HprK/P are regulated by several intracellular metabolites, which change their concentration in response to the absence or presence of rapidly metabolisable carbon sources (glucose, fructose, etc.) in the growth medium. Therefore, by controlling the phosphorylation state of HPr, HPrK/P is a sensor enzyme that plays a major role in the regulation of carbon metabolism and sugar transport: it mediates carbon catabolite repression (CCR), and regulates PTS-catalyzed carbohydrate uptake and inducer exclusion. The protein is HPr kinase/phosphorylase of Streptococcus sanguinis (strain SK36).